The primary structure comprises 230 residues: UPF0173 metal-dependent hydrolase MM_2300 (230 aa).

Belongs to the UPF0173 family.

In Methanosarcina mazei (strain ATCC BAA-159 / DSM 3647 / Goe1 / Go1 / JCM 11833 / OCM 88) (Methanosarcina frisia), this protein is UPF0173 metal-dependent hydrolase MM_2300.